The primary structure comprises 359 residues: 3-dehydroquinate synthase (359 aa).

Residues Asp71–Lys76, Gly105–Asp109, Thr129–Thr130, Lys142, Lys151, and Cys169–Thr172 contribute to the NAD(+) site. Zn(2+) is bound by residues Glu184, His247, and His264.

This sequence belongs to the sugar phosphate cyclases superfamily. Dehydroquinate synthase family. Requires Co(2+) as cofactor. Zn(2+) serves as cofactor. It depends on NAD(+) as a cofactor.

It localises to the cytoplasm. The enzyme catalyses 7-phospho-2-dehydro-3-deoxy-D-arabino-heptonate = 3-dehydroquinate + phosphate. Its pathway is metabolic intermediate biosynthesis; chorismate biosynthesis; chorismate from D-erythrose 4-phosphate and phosphoenolpyruvate: step 2/7. Catalyzes the conversion of 3-deoxy-D-arabino-heptulosonate 7-phosphate (DAHP) to dehydroquinate (DHQ). This Shewanella sp. (strain ANA-3) protein is 3-dehydroquinate synthase.